Here is a 346-residue protein sequence, read N- to C-terminus: Phosphoribosylformylglycinamidine cyclo-ligase (346 aa).

It belongs to the AIR synthase family.

It is found in the cytoplasm. It carries out the reaction 2-formamido-N(1)-(5-O-phospho-beta-D-ribosyl)acetamidine + ATP = 5-amino-1-(5-phospho-beta-D-ribosyl)imidazole + ADP + phosphate + H(+). It functions in the pathway purine metabolism; IMP biosynthesis via de novo pathway; 5-amino-1-(5-phospho-D-ribosyl)imidazole from N(2)-formyl-N(1)-(5-phospho-D-ribosyl)glycinamide: step 2/2. The chain is Phosphoribosylformylglycinamidine cyclo-ligase from Bacillus mycoides (strain KBAB4) (Bacillus weihenstephanensis).